The sequence spans 522 residues: Peptide chain release factor 3 (522 aa).

In terms of domain architecture, tr-type G spans 10–277 (ASRKTFAIIS…TFVDFAPAPS (268 aa)). GTP-binding positions include 19 to 26 (SHPDAGKT), 87 to 91 (DTPGH), and 141 to 144 (NKMD).

Belongs to the TRAFAC class translation factor GTPase superfamily. Classic translation factor GTPase family. PrfC subfamily.

It is found in the cytoplasm. Increases the formation of ribosomal termination complexes and stimulates activities of RF-1 and RF-2. It binds guanine nucleotides and has strong preference for UGA stop codons. It may interact directly with the ribosome. The stimulation of RF-1 and RF-2 is significantly reduced by GTP and GDP, but not by GMP. This chain is Peptide chain release factor 3, found in Listeria monocytogenes serovar 1/2a (strain ATCC BAA-679 / EGD-e).